The following is a 296-amino-acid chain: Haloalkane dehalogenase (296 aa).

In terms of domain architecture, AB hydrolase-1 spans 31 to 155; sequence PILFQHGNPT…QDRDLFQAFR (125 aa). N38 is a chloride binding site. D108 acts as the Nucleophile in catalysis. W109 is a chloride binding site. Catalysis depends on E132, which acts as the Proton donor. The active-site Proton acceptor is the H272.

Belongs to the haloalkane dehalogenase family. Type 2 subfamily. As to quaternary structure, monomer.

Its subcellular location is the periplasm. The enzyme catalyses 1-haloalkane + H2O = a halide anion + a primary alcohol + H(+). The catalysed reaction is (3R,6R)-1,3,4,6-tetrachlorocyclohexa-1,4-diene + 2 H2O = 2,5-dichlorocyclohexa-2,5-dien-1,4-diol + 2 chloride + 2 H(+). It functions in the pathway xenobiotic degradation; gamma-hexachlorocyclohexane degradation. Its activity is regulated as follows. Competitively inhibited by the key pollutants 1,2-dichloroethane (1,2-DCE) and 1,2-dichloropropane (1,2-DCP). Catalyzes hydrolytic cleavage of carbon-halogen bonds in halogenated aliphatic compounds, leading to the formation of the corresponding primary alcohols, halide ions and protons. Has a broad substrate specificity since not only monochloroalkanes (C3 to C10) but also dichloroalkanes (&gt; C3), bromoalkanes, and chlorinated aliphatic alcohols are good substrates. Shows almost no activity with 1,2-dichloroethane, but very high activity with the brominated analog. Is involved in the degradation of the important environmental pollutant gamma-hexachlorocyclohexane (gamma-HCH or lindane) as it also catalyzes conversion of 1,3,4,6-tetrachloro-1,4-cyclohexadiene (1,4-TCDN) to 2,5-dichloro-2,5-cyclohexadiene-1,4-diol (2,5-DDOL) via the intermediate 2,4,5-trichloro-2,5-cyclohexadiene-1-ol (2,4,5-DNOL). This degradation pathway allows S.japonicum UT26 to grow on gamma-HCH as the sole source of carbon and energy. The chain is Haloalkane dehalogenase from Sphingobium indicum (strain DSM 16413 / CCM 7287 / MTCC 6362 / UT26 / NBRC 101211 / UT26S) (Sphingobium japonicum).